A 285-amino-acid chain; its full sequence is tRNA U34 carboxymethyltransferase (285 aa).

Carboxy-S-adenosyl-L-methionine is bound by residues K56, W70, K75, G94, 143-144, Y163, and R278; that span reads VE.

It belongs to the class I-like SAM-binding methyltransferase superfamily. CmoB family. Homotetramer.

It carries out the reaction carboxy-S-adenosyl-L-methionine + 5-hydroxyuridine(34) in tRNA = 5-carboxymethoxyuridine(34) in tRNA + S-adenosyl-L-homocysteine + H(+). Its function is as follows. Catalyzes carboxymethyl transfer from carboxy-S-adenosyl-L-methionine (Cx-SAM) to 5-hydroxyuridine (ho5U) to form 5-carboxymethoxyuridine (cmo5U) at position 34 in tRNAs. The sequence is that of tRNA U34 carboxymethyltransferase from Campylobacter hominis (strain ATCC BAA-381 / DSM 21671 / CCUG 45161 / LMG 19568 / NCTC 13146 / CH001A).